The chain runs to 732 residues: Catalase-peroxidase (732 aa).

Residues 1 to 45 form the signal peptide; sequence MDTKVDNAGKCPVVHTHTAHGGRSNRDWWPNQLNLRILHQNSSLS. Residues 97–220 constitute a cross-link (tryptophyl-tyrosyl-methioninium (Trp-Tyr) (with M-246)); it reads WHSAGTYRTG…LSAVQMGLIY (124 aa). The active-site Proton acceptor is the histidine 98. Residues 220–246 constitute a cross-link (tryptophyl-tyrosyl-methioninium (Tyr-Met) (with W-97)); sequence YVNPEGPNGNPDPLAAARDIRETFARM. Histidine 261 lines the heme b pocket.

Belongs to the peroxidase family. Peroxidase/catalase subfamily. As to quaternary structure, homodimer or homotetramer. Requires heme b as cofactor. Formation of the three residue Trp-Tyr-Met cross-link is important for the catalase, but not the peroxidase activity of the enzyme.

The enzyme catalyses H2O2 + AH2 = A + 2 H2O. The catalysed reaction is 2 H2O2 = O2 + 2 H2O. In terms of biological role, bifunctional enzyme with both catalase and broad-spectrum peroxidase activity. This chain is Catalase-peroxidase, found in Rhizobium rhizogenes (strain K84 / ATCC BAA-868) (Agrobacterium radiobacter).